The sequence spans 1836 residues: U3 small nucleolar RNA-associated protein 10 (1836 aa).

Residues 245–283 (EVVGFLLLPSKYETLRNIDVDTRLTAYSIIAVLASIIPI) form an HEAT 1 repeat. Residues 453 to 473 (SNSSVRDSDDVEFDAGEEDNN) are disordered. Residues 461 to 473 (DDVEFDAGEEDNN) are compositionally biased toward acidic residues. HEAT repeat units follow at residues 585 to 623 (PLDL…TTTS) and 813 to 850 (VENR…DQDL). The disordered stretch occupies residues 863–883 (QIPEQGPAKRRRRSSSSTKQA). Helical transmembrane passes span 998-1018 (LLLV…HSVM) and 1085-1105 (LFTY…LLFL). HEAT repeat units follow at residues 1333–1372 (ESVL…KFGA), 1749–1787 (ETLV…KMGE), and 1790–1828 (LTYL…NVLG).

It belongs to the HEATR1/UTP10 family. In terms of assembly, component of the ribosomal small subunit (SSU) processome.

Its subcellular location is the nucleus. The protein resides in the nucleolus. It is found in the membrane. Involved in nucleolar processing of pre-18S ribosomal RNA. Involved in ribosome biosynthesis. The protein is U3 small nucleolar RNA-associated protein 10 of Scheffersomyces stipitis (strain ATCC 58785 / CBS 6054 / NBRC 10063 / NRRL Y-11545) (Yeast).